Reading from the N-terminus, the 313-residue chain is Cytochrome c biogenesis protein CcsA (313 aa).

8 helical membrane passes run 9 to 29, 44 to 64, 71 to 91, 111 to 131, 143 to 163, 217 to 237, 244 to 264, and 278 to 298; these read ILTH…LITF, GIIV…ISSG, LYES…IPYF, GFAT…VPAL, MILG…LLVI, VISL…VWAN, WNWD…AIYL, and AIVA…VNLL.

This sequence belongs to the CcmF/CycK/Ccl1/NrfE/CcsA family. As to quaternary structure, may interact with Ccs1.

Its subcellular location is the plastid. The protein localises to the chloroplast thylakoid membrane. Its function is as follows. Required during biogenesis of c-type cytochromes (cytochrome c6 and cytochrome f) at the step of heme attachment. The protein is Cytochrome c biogenesis protein CcsA of Solanum bulbocastanum (Wild potato).